A 423-amino-acid chain; its full sequence is GTPase Obg (423 aa).

The Obg domain occupies 1–158; that stretch reads MFIDTARIYI…MWVRLELKLL (158 aa). The 171-residue stretch at 159 to 329 folds into the OBG-type G domain; it reads ADVGLIGFPN…LLDKTIEILS (171 aa). Residues 165–172, 190–194, 211–214, 281–284, and 310–312 each bind GTP; these read GFPNAGKS, FTTLT, DIPG, NKID, and SAL. Mg(2+) is bound by residues serine 172 and threonine 192. An OCT domain is found at 346–423; that stretch reads TPPEEEETLN…VRDFEFEYYE (78 aa).

The protein belongs to the TRAFAC class OBG-HflX-like GTPase superfamily. OBG GTPase family. Monomer. The cofactor is Mg(2+).

The protein localises to the cytoplasm. An essential GTPase which binds GTP, GDP and possibly (p)ppGpp with moderate affinity, with high nucleotide exchange rates and a fairly low GTP hydrolysis rate. Plays a role in control of the cell cycle, stress response, ribosome biogenesis and in those bacteria that undergo differentiation, in morphogenesis control. The protein is GTPase Obg of Thermoanaerobacter pseudethanolicus (strain ATCC 33223 / 39E) (Clostridium thermohydrosulfuricum).